We begin with the raw amino-acid sequence, 224 residues long: Cytidylate kinase (224 aa).

11–19 is a binding site for ATP; it reads GPAAAGKST.

The protein belongs to the cytidylate kinase family. Type 1 subfamily.

The protein localises to the cytoplasm. It catalyses the reaction CMP + ATP = CDP + ADP. The enzyme catalyses dCMP + ATP = dCDP + ADP. The polypeptide is Cytidylate kinase (Listeria innocua serovar 6a (strain ATCC BAA-680 / CLIP 11262)).